A 454-amino-acid polypeptide reads, in one-letter code: UDP-N-acetylmuramate--L-alanine ligase (454 aa).

113-119 (GSHGKTT) lines the ATP pocket.

The protein belongs to the MurCDEF family.

The protein resides in the cytoplasm. It carries out the reaction UDP-N-acetyl-alpha-D-muramate + L-alanine + ATP = UDP-N-acetyl-alpha-D-muramoyl-L-alanine + ADP + phosphate + H(+). The protein operates within cell wall biogenesis; peptidoglycan biosynthesis. In terms of biological role, cell wall formation. In Sulfurihydrogenibium sp. (strain YO3AOP1), this protein is UDP-N-acetylmuramate--L-alanine ligase.